We begin with the raw amino-acid sequence, 1209 residues long: MLGHAVNYGSHRTRRSFSRIKEVLKLPNLTDVQTQSYKWFLNEGIREMFDDIMPISDFSGKLSLEFVDYKLLKPKYTLEEARDHDANYSAPLHVTLKLTNHETGEIKTQDVFFGEFPLMTDSGTFVINGAERVIVSQLVRSPGVYYHSDFDKNGRQIFGATVIPNRGAWLEYETDAKDLAYVRIDRTRKLPLTVLIRALGFGSDSEIADMFGESDSIRFTLEKDIHKNPADSRVAEALKDIYERLRPGEPKTTDSSRSLLYARFFDPRRYDLAPVGRYKINKKLSLKNRLLRQTLAETLADPDTGEIIAKKGDVVTHELLDKLSPYLDRDDFKMVTYEPSKEGVLPDPVTVQEIKVYSKVDPERVVKLMSNGHIADDVKHLTPADVLASINYFFDLQDNIGTTDDIDHLGNRRIRRVGELLQNQFRIGLARMERVVRERMSIQDISTVTPQQLINIRPVVASVKEFFGSSQLSQFMDQNNPLGELTHKRRMSALGPGGLSRDRAGYEVRDVHYTHYGRLCPIETPEGPNIGLINSLATYAIVNKYGFIETPYRRVSWDTHKVTDKIDYLTADVEDNYIIAGANARLNEDGSFKDKIVLARHKEDNLEVTPDKIDYMDVIPKQVVSVTSACIPFLENDDSNRALMGANHQRQAVPLINPHAPIVGTGMEYRAAHDSGDALVAKAPGVVEYVDANEIRIRRDDDTLDKYVLEKFRRSNATKNYNQTPAVKQGERVVADEVIADGPAMENGELALGQNPIIAFLTWNMYNYEDAVMISERMVKDDVYTSIHIEDYESEARDTKLGPEEITREIPNVGEDALKDLDEEGIVRIGAEVQDGDILVGKVTPKGVTELSAEERLLHAIFGEKAREVRDTSLRVPHGGGGIVQNVQVFTREAGDELPPGVNKMVRVYIVQKRKIQVGDKMSGRHGNKGTIALVCPEEDMPYLPDGRPVDICLNPMGVPSRMNIGQVLELHLGIAAKQLGIHVATPVFDGASEDDMWNMVREAGIGKDGKTVLYDGRTGEPFHNRVSVGIMYYLKLTHMVDDKIHARSIGPYSLVTQQPLGGKAQFGGQRFGEMEVWALEAYGAAYTLQEILTYKSDDVVGRVKAYEAIVKGERIPKPGVPESFRVLVKELQSLGLDIKVLDMDHKEIELRDMDDDSNDHFNIDTLSKLAEQQEKKKLAEEAAKKDDKPDEPVDESDSSTSSDDKVSK.

Over residues 1173–1192 the composition is skewed to basic and acidic residues; the sequence is QQEKKKLAEEAAKKDDKPDE. The interval 1173–1209 is disordered; it reads QQEKKKLAEEAAKKDDKPDEPVDESDSSTSSDDKVSK.

Belongs to the RNA polymerase beta chain family. As to quaternary structure, the RNAP catalytic core consists of 2 alpha, 1 beta, 1 beta' and 1 omega subunit. When a sigma factor is associated with the core the holoenzyme is formed, which can initiate transcription.

It catalyses the reaction RNA(n) + a ribonucleoside 5'-triphosphate = RNA(n+1) + diphosphate. DNA-dependent RNA polymerase catalyzes the transcription of DNA into RNA using the four ribonucleoside triphosphates as substrates. In Lactobacillus johnsonii (strain CNCM I-12250 / La1 / NCC 533), this protein is DNA-directed RNA polymerase subunit beta.